A 189-amino-acid polypeptide reads, in one-letter code: Elongation factor P (189 aa).

Lys34 is modified (N6-(3,6-diaminohexanoyl)-5-hydroxylysine).

The protein belongs to the elongation factor P family. In terms of processing, may be beta-lysylated on the epsilon-amino group of Lys-34 by the combined action of EpmA and EpmB, and then hydroxylated on the C5 position of the same residue by EpmC (if this protein is present). Lysylation is critical for the stimulatory effect of EF-P on peptide-bond formation. The lysylation moiety may extend toward the peptidyltransferase center and stabilize the terminal 3-CCA end of the tRNA. Hydroxylation of the C5 position on Lys-34 may allow additional potential stabilizing hydrogen-bond interactions with the P-tRNA.

The protein localises to the cytoplasm. It participates in protein biosynthesis; polypeptide chain elongation. Involved in peptide bond synthesis. Alleviates ribosome stalling that occurs when 3 or more consecutive Pro residues or the sequence PPG is present in a protein, possibly by augmenting the peptidyl transferase activity of the ribosome. Modification of Lys-34 is required for alleviation. The chain is Elongation factor P from Dichelobacter nodosus (strain VCS1703A).